Reading from the N-terminus, the 349-residue chain is tRNA N6-adenosine threonylcarbamoyltransferase (349 aa).

Fe cation-binding residues include His114 and His118. Residues 136–140 (IMSGG), Asp169, Gly182, and Asn280 contribute to the substrate site. Fe cation is bound at residue Asp308.

It belongs to the KAE1 / TsaD family. The cofactor is Fe(2+).

It is found in the cytoplasm. The enzyme catalyses L-threonylcarbamoyladenylate + adenosine(37) in tRNA = N(6)-L-threonylcarbamoyladenosine(37) in tRNA + AMP + H(+). Required for the formation of a threonylcarbamoyl group on adenosine at position 37 (t(6)A37) in tRNAs that read codons beginning with adenine. Is involved in the transfer of the threonylcarbamoyl moiety of threonylcarbamoyl-AMP (TC-AMP) to the N6 group of A37, together with TsaE and TsaB. TsaD likely plays a direct catalytic role in this reaction. This is tRNA N6-adenosine threonylcarbamoyltransferase from Ehrlichia chaffeensis (strain ATCC CRL-10679 / Arkansas).